The following is a 169-amino-acid chain: GTP-dependent dephospho-CoA kinase (169 aa).

GTP-binding residues include Asp45, Asp64, Lys66, and Glu121.

This sequence belongs to the GTP-dependent DPCK family.

The catalysed reaction is 3'-dephospho-CoA + GTP = GDP + CoA + H(+). It functions in the pathway cofactor biosynthesis; coenzyme A biosynthesis. Its function is as follows. Catalyzes the GTP-dependent phosphorylation of the 3'-hydroxyl group of dephosphocoenzyme A to form coenzyme A (CoA). The sequence is that of GTP-dependent dephospho-CoA kinase from Methanosphaera stadtmanae (strain ATCC 43021 / DSM 3091 / JCM 11832 / MCB-3).